The chain runs to 176 residues: Tubulin polymerization-promoting protein family member 3 (176 aa).

The residue at position 2 (A2) is an N-acetylalanine.

Belongs to the TPPP family.

It is found in the cytoplasm. Its subcellular location is the cytoskeleton. Its function is as follows. Regulator of microtubule dynamic that has microtubule bundling activity. Required for embryo implantation; possibly by regulating beta-catenin. Also required for decidualization via regulation of beta-catenin. In Rattus norvegicus (Rat), this protein is Tubulin polymerization-promoting protein family member 3 (Tppp3).